Here is a 94-residue protein sequence, read N- to C-terminus: Antifungal protein (94 aa).

Positions 1–21 are cleaved as a signal peptide; the sequence is MKFVSLASLGFALVAALGAVA. Positions 22–43 are excised as a propeptide; it reads TPVEADSLTAGGLDARDESAVL. Cystine bridges form between Cys50/Cys76, Cys57/Cys83, Cys69/Cys71, and Cys92/Cys94.

Belongs to the antifungal protein pafB family.

It localises to the secreted. The protein localises to the host cytoplasm. In terms of biological role, antifungal protein that acts as an inhibitor of growth of a variety of fungal species. The protein is Antifungal protein (afp) of Aspergillus giganteus.